Here is a 732-residue protein sequence, read N- to C-terminus: Translation initiation factor eIF2B subunit epsilon (732 aa).

Positions 559-726 (GEEEEDFGVE…QEADEEDSDE (168 aa)) constitute a W2 domain.

Belongs to the eIF-2B gamma/epsilon subunits family. In terms of assembly, component of the translation initiation factor 2B (eIF2B) complex which is a heterodecamer of two sets of five different subunits: alpha, beta, gamma, delta and epsilon. Subunits alpha, beta and delta comprise a regulatory subcomplex and subunits epsilon and gamma comprise a catalytic subcomplex. Within the complex, the hexameric regulatory complex resides at the center, with the two heterodimeric catalytic subcomplexes bound on opposite sides.

It localises to the cytoplasm. Its subcellular location is the cytosol. In terms of biological role, acts as a component of the translation initiation factor 2B (eIF2B) complex, which catalyzes the exchange of GDP for GTP on the eukaryotic initiation factor 2 (eIF2) complex gamma subunit. Its guanine nucleotide exchange factor activity is repressed when bound to eIF2 complex phosphorylated on the alpha subunit, thereby limiting the amount of methionyl-initiator methionine tRNA available to the ribosome and consequently global translation is repressed. This is Translation initiation factor eIF2B subunit epsilon (GCD6) from Candida albicans (strain SC5314 / ATCC MYA-2876) (Yeast).